A 725-amino-acid polypeptide reads, in one-letter code: Phosphatase and actin regulator 4A (725 aa).

Polar residues predominate over residues 1–12; that stretch reads MGQGASTQTLNP. The interval 1–597 is disordered; sequence MGQGASTQTL…SSTWNNKEQW (597 aa). Basic residues predominate over residues 55–64; that stretch reads KPWKWRKKKT. 3 stretches are compositionally biased toward basic and acidic residues: residues 65 to 100, 124 to 147, and 155 to 164; these read SDKF…KDIP, GDRK…GERK, and KRNDGTERMT. The stretch at 75–100 is one RPEL 1 repeat; that stretch reads LVLERKMSVRKPREELIERGLLKDIP. A compositionally biased stretch (polar residues) spans 166–177; it reads MIQSFQKMSLMQ. Over residues 212-221 the composition is skewed to low complexity; that stretch reads VIAAPSSAEP. The segment covering 222 to 235 has biased composition (pro residues); sequence APVPPPPIAKPPPR. Low complexity-rich tracts occupy residues 265–276 and 292–313; these read PAHTTPATVSTH and PAHV…LLKQ. Over residues 359-368 the composition is skewed to polar residues; sequence TPVTKRNSGD. Positions 374-384 are enriched in pro residues; it reads PEPPPPAPTSV. A compositionally biased stretch (low complexity) spans 385–401; it reads PIPAAAPISAPPSTQSD. Over residues 402 to 417 the composition is skewed to pro residues; the sequence is PPSPTTEPPSQPPPLP. Residues 497-510 show a composition bias toward basic and acidic residues; the sequence is QKPELEPRSRRGLV. Acidic residues-rich tracts occupy residues 522–536 and 545–554; these read AGSE…ESDS and DNEEDDDEED. Residues 567 to 585 show a composition bias toward basic and acidic residues; it reads KDTLALKLERQQEKEKSQE. 2 RPEL repeats span residues 606–631 and 644–669; these read TALT…LAKN and RRLT…RFHE.

This sequence belongs to the phosphatase and actin regulator family. Binds ppp1ca and actin.

Its subcellular location is the cytoplasm. The protein localises to the cell projection. It is found in the lamellipodium. Regulator of protein phosphatase 1 (PP1) required for neural tube and optic fissure closure, and enteric neural crest cell (ENCCs) migration during development. Acts as an activator of PP1. During neural tube closure, localizes to the ventral neural tube and activates PP1, leading to down-regulate cell proliferation within cranial neural tissue and the neural retina. Also acts as a regulator of migration of enteric neural crest cells (ENCCs) by activating PP1, leading to repression of the integrin signaling through the rho/rock pathway. The sequence is that of Phosphatase and actin regulator 4A (phactr4a) from Danio rerio (Zebrafish).